The sequence spans 59 residues: Large ribosomal subunit protein uL30 (59 aa).

This sequence belongs to the universal ribosomal protein uL30 family. As to quaternary structure, part of the 50S ribosomal subunit.

The sequence is that of Large ribosomal subunit protein uL30 from Haemophilus ducreyi (strain 35000HP / ATCC 700724).